The following is a 405-amino-acid chain: L-cysteine:1D-myo-inositol 2-amino-2-deoxy-alpha-D-glucopyranoside ligase (405 aa).

Residue Cys-43 participates in Zn(2+) binding. L-cysteinyl-5'-AMP is bound by residues Cys-43 to Thr-46, Thr-58, and Asn-81 to Thr-83. The 'HIGH' region signature appears at Ile-45 to His-55. A 'ERGGDP' region motif is present at residues Glu-187–Pro-192. Position 227 (Trp-227) interacts with L-cysteinyl-5'-AMP. Cys-231 is a Zn(2+) binding site. Residue Gly-249–Asp-251 coordinates L-cysteinyl-5'-AMP. His-256 is a Zn(2+) binding site. Ile-283 lines the L-cysteinyl-5'-AMP pocket. The 'KMSKS' region signature appears at Lys-289–Ser-293.

Belongs to the class-I aminoacyl-tRNA synthetase family. MshC subfamily. As to quaternary structure, monomer. Zn(2+) serves as cofactor.

The enzyme catalyses 1D-myo-inositol 2-amino-2-deoxy-alpha-D-glucopyranoside + L-cysteine + ATP = 1D-myo-inositol 2-(L-cysteinylamino)-2-deoxy-alpha-D-glucopyranoside + AMP + diphosphate + H(+). In terms of biological role, catalyzes the ATP-dependent condensation of GlcN-Ins and L-cysteine to form L-Cys-GlcN-Ins. The polypeptide is L-cysteine:1D-myo-inositol 2-amino-2-deoxy-alpha-D-glucopyranoside ligase (Nakamurella multipartita (strain ATCC 700099 / DSM 44233 / CIP 104796 / JCM 9543 / NBRC 105858 / Y-104) (Microsphaera multipartita)).